The following is an 868-amino-acid chain: MLKGIHKYLLMCFGTVLFTVQANAARIMSNNPIKEDWQCKVVDGEWSCKRAKKPKSVFDKKLTKTEKEKALADDLAWVKKPSYFVGGYYSNDNQFTKALCESKKTDLSYEKSEFDNYGTLIASGNVQVLQCDQELYGNNAIINLNSNNSAIRSLVMAGDVIVKQPSTGIVIRTTELDADMNNGTYSTGEAYFRLAREMPKTRIYDKEHFSGYLRGYAKTFKKESSGDIVLSDGYITSGDPYDNAWKITGNNIDIDTNTHMAYVKNGYFEIQDIPVMYIPYFSHPIDDRRRSGFLYPGFLQNANSGIGISVPYYFNLAPNYDLMLQSVIWSQRGIIENGTFRYMTKYFQGQFEGSLVPYDFKEGKMRSSFTLSTTGQYENINTNFKYEYVSDQNYYNDFSAGNVNLVTKTLLDREFDLTYTNDYVDSGLTVLDYGVVNPLLTVDNTPYAKLPEVKLNLTSDGYTPDYLTLSAQTLNTFFYKTAGPANTNPGAPQGTNVNAFRAYESPKIAFNFNKTWGYLKPSLELPIRYYKLNNKPTDIIKFKNSNVTSVLPIFNIDAGAYFDKDYTNENGTYTSTLHPRLFYTYIPYQDQTNIPLFDTSLQNEQYMQMFQVNRFTGYDRINNANQLTYAIEASTTNQDNGTTLASAKIGQMAYFADRKVNLCQGNSACPNPGLMDPFSTDTFSPIMSSFEFQVMKNIYLSAQVNYRVKQQNVDYQVYQLSYKDENENIFNVSYNNIANNWNSLTQQQIAEGAKPQPQETITLSTVLNITDHWGIAALWNYNFQQKQIANIFAGLQYNAKSWAVRALWQKTAYTNQDPNNPTLLGPLVNTYMFEFELKGLGGIGNTSDISSRLQQINGYQVGEWGNGI.

The signal sequence occupies residues 1 to 24 (MLKGIHKYLLMCFGTVLFTVQANA).

Belongs to the LptD family. As to quaternary structure, component of the lipopolysaccharide transport and assembly complex. Interacts with LptE and LptA.

The protein resides in the cell outer membrane. Together with LptE, is involved in the assembly of lipopolysaccharide (LPS) at the surface of the outer membrane. The sequence is that of LPS-assembly protein LptD from Francisella tularensis subsp. holarctica (strain LVS).